A 173-amino-acid chain; its full sequence is Lipoprotein signal peptidase (173 aa).

4 helical membrane-spanning segments follow: residues 7-27 (FFWFTALLSLLLDHLTKLWVV), 41-61 (LWPGVFHLTYVTNTGAAFSLF), 70-90 (WLSLGVSVGLMALAILGPNFN), and 95-115 (AGYGFLLGGAAGNGIDRFVAG). Active-site residues include aspartate 119 and aspartate 135. Residues 130–150 (IFNLADVFINIGIICLLIAAW) form a helical membrane-spanning segment.

The protein belongs to the peptidase A8 family.

The protein localises to the cell inner membrane. The catalysed reaction is Release of signal peptides from bacterial membrane prolipoproteins. Hydrolyzes -Xaa-Yaa-Zaa-|-(S,diacylglyceryl)Cys-, in which Xaa is hydrophobic (preferably Leu), and Yaa (Ala or Ser) and Zaa (Gly or Ala) have small, neutral side chains.. Its pathway is protein modification; lipoprotein biosynthesis (signal peptide cleavage). This protein specifically catalyzes the removal of signal peptides from prolipoproteins. This is Lipoprotein signal peptidase from Cyanothece sp. (strain PCC 7425 / ATCC 29141).